The following is a 382-amino-acid chain: SAT4 family membrane protein (382 aa).

A disordered region spans residues 1–22 (MFGAELVGRETGGQSTDQPYSY). A glycan (N-linked (GlcNAc...) asparagine) is linked at N78. 2 helical membrane passes run 80–100 (SQIL…LLYL) and 112–132 (YLSI…NFFL). N-linked (GlcNAc...) asparagine glycosylation is present at N147. The next 3 membrane-spanning stretches (helical) occupy residues 159-179 (ILVT…LPII), 192-212 (LGIS…IMRL), and 228-248 (WYTE…PTFF). N269 carries N-linked (GlcNAc...) asparagine glycosylation.

Belongs to the SAT4 family.

The protein resides in the membrane. The sequence is that of SAT4 family membrane protein from Emericella nidulans (strain FGSC A4 / ATCC 38163 / CBS 112.46 / NRRL 194 / M139) (Aspergillus nidulans).